The primary structure comprises 76 residues: Putative small nuclear ribonucleoprotein G-like protein 15 (76 aa).

One can recognise a Sm domain in the interval 4 to 76 (AHPPELKKFT…IIMLEALERV (73 aa)).

It belongs to the snRNP Sm proteins family.

It localises to the nucleus. Associated with snRNP U1, U2, U4/U6 and U5. This Homo sapiens (Human) protein is Putative small nuclear ribonucleoprotein G-like protein 15 (SNRPGP15).